Consider the following 289-residue polypeptide: Diaminopimelate epimerase (289 aa).

Substrate contacts are provided by asparagine 17, glutamine 47, and asparagine 67. Cysteine 76 serves as the catalytic Proton donor. Substrate contacts are provided by residues 77–78 (GN), asparagine 164, asparagine 198, and 216–217 (ER). The active-site Proton acceptor is cysteine 225. Substrate is bound at residue 226 to 227 (GS).

It belongs to the diaminopimelate epimerase family. Homodimer.

It is found in the cytoplasm. It carries out the reaction (2S,6S)-2,6-diaminopimelate = meso-2,6-diaminopimelate. The protein operates within amino-acid biosynthesis; L-lysine biosynthesis via DAP pathway; DL-2,6-diaminopimelate from LL-2,6-diaminopimelate: step 1/1. In terms of biological role, catalyzes the stereoinversion of LL-2,6-diaminopimelate (L,L-DAP) to meso-diaminopimelate (meso-DAP), a precursor of L-lysine and an essential component of the bacterial peptidoglycan. This is Diaminopimelate epimerase from Bradyrhizobium sp. (strain BTAi1 / ATCC BAA-1182).